The chain runs to 124 residues: Large ribosomal subunit protein bL12 (124 aa).

It belongs to the bacterial ribosomal protein bL12 family. Homodimer. Part of the ribosomal stalk of the 50S ribosomal subunit. Forms a multimeric L10(L12)X complex, where L10 forms an elongated spine to which 2 to 4 L12 dimers bind in a sequential fashion. Binds GTP-bound translation factors.

Its function is as follows. Forms part of the ribosomal stalk which helps the ribosome interact with GTP-bound translation factors. Is thus essential for accurate translation. The protein is Large ribosomal subunit protein bL12 of Bacteroides fragilis (strain ATCC 25285 / DSM 2151 / CCUG 4856 / JCM 11019 / LMG 10263 / NCTC 9343 / Onslow / VPI 2553 / EN-2).